The primary structure comprises 186 residues: Superoxide dismutase [Cu-Zn] (186 aa).

An N-terminal signal peptide occupies residues 1 to 20; that stretch reads MKKTVLALMFSCGMVASAFA. Cu cation contacts are provided by His-79, His-81, and His-104. Cysteines 86 and 182 form a disulfide. Positions 104, 113, 122, and 125 each coordinate Zn(2+). His-160 is a Cu cation binding site.

It belongs to the Cu-Zn superoxide dismutase family. Homodimer. It depends on Cu cation as a cofactor. Requires Zn(2+) as cofactor.

The protein localises to the periplasm. The enzyme catalyses 2 superoxide + 2 H(+) = H2O2 + O2. Destroys radicals which are normally produced within the cells and which are toxic to biological systems. This chain is Superoxide dismutase [Cu-Zn] (sodC), found in Pasteurella multocida (strain Pm70).